The chain runs to 217 residues: Ribosomal RNA small subunit methyltransferase G (217 aa).

S-adenosyl-L-methionine-binding positions include G79, L84, 102–104 (DST), 130–131 (VE), and R144.

It belongs to the methyltransferase superfamily. RNA methyltransferase RsmG family.

It localises to the cytoplasm. Functionally, specifically methylates the N7 position of a guanine in 16S rRNA. This chain is Ribosomal RNA small subunit methyltransferase G, found in Chlorobaculum tepidum (strain ATCC 49652 / DSM 12025 / NBRC 103806 / TLS) (Chlorobium tepidum).